Here is a 340-residue protein sequence, read N- to C-terminus: Mitochondrial carrier protein CoAc1 (340 aa).

6 consecutive transmembrane segments (helical) span residues 22–42 (ALDL…AGAF), 85–105 (FYKG…LHYM), 130–147 (LLAG…TYPL), 199–219 (GVGP…YIYE), 237–257 (LSCG…LDVV), and 297–317 (FAGL…GFTT). Solcar repeat units follow at residues 27-113 (PVYA…YRCW), 124-224 (TGPV…LKSQ), and 231-324 (DSVI…MKAL).

This sequence belongs to the mitochondrial carrier (TC 2.A.29) family. As to expression, expressed throughout the plant.

It localises to the mitochondrion inner membrane. In terms of biological role, required for the accumulation of coenzyme A in the mitochondrial matrix. This Zea mays (Maize) protein is Mitochondrial carrier protein CoAc1.